The chain runs to 473 residues: Adhesive plaque matrix protein 2 (473 aa).

The N-terminal stretch at 1 to 17 (MLFSFFLLLTCTQLCLG) is a signal peptide. 4 positions are modified to 3',4'-dihydroxyphenylalanine: Tyr-23, Tyr-31, Tyr-36, and Tyr-43. EGF-like domains lie at 45-81 (PVNPCLKKPCKYNGVCKPRGGSYKCFCKGGYYGYNCN), 82-117 (LKNACKPNQCKNKSRCVPVGKTFKCVCRNGNFGRLC), 118-154 (EKNVCSPNPCKNNGKCSPLGKTGYKCTCSGGYTGPRC), 155-191 (EVHACKPNPCKNKGRCFPDGKTGYKCRCVDGYSGPTC), 192-228 (QENACKPNPCSNGGTCSADKFGDYSCECRPGYFGPEC), 229-265 (ERYVCAPNPCKNGGICSSDGSGGYRCRCKGGYSGPTC), 266-301 (KVNVCKPTPCKNSGRCVNKGSSYNCICKGGYSGPTC), 302-340 (GENVCKPNPCQNRGRCYPDNSDDGFKCRCVGGYKGPTCE), 342-378 (KPNPCNTKPCKNGGKCNYNGKIYTCKCAYGWRGRHCT), 383-420 (KPNPCVVSKPCKNRGKCIWNGKAYRCKCAYGYGGRHCT), and 425-461 (KKNPCASRPCKNRGKCTDKGNGYVCKCARGYSGRYCS). 33 disulfide bridges follow: Cys-49-Cys-60, Cys-54-Cys-69, Cys-71-Cys-80, Cys-86-Cys-97, Cys-91-Cys-106, Cys-108-Cys-117, Cys-122-Cys-133, Cys-127-Cys-143, Cys-145-Cys-154, Cys-159-Cys-170, Cys-164-Cys-180, Cys-182-Cys-191, Cys-196-Cys-207, Cys-201-Cys-217, Cys-219-Cys-228, Cys-233-Cys-244, Cys-238-Cys-254, Cys-256-Cys-265, Cys-270-Cys-281, Cys-275-Cys-290, Cys-292-Cys-301, Cys-306-Cys-317, Cys-311-Cys-328, Cys-330-Cys-339, Cys-346-Cys-357, Cys-351-Cys-366, Cys-368-Cys-377, Cys-387-Cys-399, Cys-393-Cys-408, Cys-410-Cys-419, Cys-429-Cys-440, Cys-434-Cys-449, and Cys-451-Cys-460. A glycan (N-linked (GlcNAc...) asparagine) is linked at Asn-93.

Contains L-DOPA (3',4'-dihydroxyphenylalanine). In terms of tissue distribution, produced by the byssal gland.

Its subcellular location is the secreted. Provides adhesiveness to the mussel's foot. Mussels produce one of the strongest water insoluble glues. The mussel's adhesive is a bundle of threads, called a byssus, formed by a fibrous collagenous core coated with adhesive proteins. This Mytilus galloprovincialis (Mediterranean mussel) protein is Adhesive plaque matrix protein 2 (FP2).